The primary structure comprises 198 residues: NADH-quinone oxidoreductase subunit B (198 aa).

The span at 1-20 shows a compositional bias: polar residues; sequence MGLNPTQVSTSGSPQVSQPA. The tract at residues 1–29 is disordered; it reads MGLNPTQVSTSGSPQVSQPATGVLDPRTG. Residues C77, C78, C142, and C172 each coordinate [4Fe-4S] cluster.

It belongs to the complex I 20 kDa subunit family. NDH-1 is composed of 14 different subunits. Subunits NuoB, C, D, E, F, and G constitute the peripheral sector of the complex. [4Fe-4S] cluster serves as cofactor.

The protein localises to the cell inner membrane. The enzyme catalyses a quinone + NADH + 5 H(+)(in) = a quinol + NAD(+) + 4 H(+)(out). NDH-1 shuttles electrons from NADH, via FMN and iron-sulfur (Fe-S) centers, to quinones in the respiratory chain. The immediate electron acceptor for the enzyme in this species is believed to be ubiquinone. Couples the redox reaction to proton translocation (for every two electrons transferred, four hydrogen ions are translocated across the cytoplasmic membrane), and thus conserves the redox energy in a proton gradient. The protein is NADH-quinone oxidoreductase subunit B of Afipia carboxidovorans (strain ATCC 49405 / DSM 1227 / KCTC 32145 / OM5) (Oligotropha carboxidovorans).